Reading from the N-terminus, the 489-residue chain is MARGDGHLWTETYDSSTVAFMILGAALVFFMVPGLGFLYSGLARRKSALALIWVVIMATLVGILQWYFWGYSLAFSKTATNNKFIGNLDSFGFRNVYGKISDDSTYPELIYAIFQMMFMCVALSIIAGATAERGKLFPHMVFLFVFATLVYCPITYWIWAPGGWAYQWGVLDWAGGGNIEILSAVAGFVYSYFLGRRKENLLINFRPHNVSMVTLGTSILWFGWLLFNAASSLSPNMRSVYAFMNTCLSATTGGMTWCLLDYRSEKKWSTVGLCSGIICGLVAATPSSGCITLYGSLIQGIIAGVVCNFATKIKYYLKVDDSLDLLAEHGIAGVVGLIFNALFAADWVIGMDGTTKHKGGWLTHNWKQMYIQIAYIGASAGYCAVVTAIICFVLGKIPGVHLRVTEEAEALGLDEDQIGEFAYDYVEVRRDYYQWGVDTDALHTTCNGANSASETNPTEDSQNSSLSSATVSGQNEKSNNPKLHHAKEA.

At 1–17 (MARGDGHLWTETYDSST) the chain is on the extracellular side. The chain crosses the membrane as a helical span at residues 18 to 38 (VAFMILGAALVFFMVPGLGFL). Topologically, residues 39-48 (YSGLARRKSA) are cytoplasmic. A helical transmembrane segment spans residues 49 to 69 (LALIWVVIMATLVGILQWYFW). The Extracellular segment spans residues 70-108 (GYSLAFSKTATNNKFIGNLDSFGFRNVYGKISDDSTYPE). A helical transmembrane segment spans residues 109 to 129 (LIYAIFQMMFMCVALSIIAGA). Residues 130 to 139 (TAERGKLFPH) are Cytoplasmic-facing. A helical transmembrane segment spans residues 140 to 160 (MVFLFVFATLVYCPITYWIWA). The Extracellular portion of the chain corresponds to 161–173 (PGGWAYQWGVLDW). A helical membrane pass occupies residues 174–194 (AGGGNIEILSAVAGFVYSYFL). At 195–209 (GRRKENLLINFRPHN) the chain is on the cytoplasmic side. Residues 210 to 230 (VSMVTLGTSILWFGWLLFNAA) traverse the membrane as a helical segment. Topologically, residues 231–239 (SSLSPNMRS) are extracellular. A helical transmembrane segment spans residues 240-260 (VYAFMNTCLSATTGGMTWCLL). The Cytoplasmic portion of the chain corresponds to 261–267 (DYRSEKK). A helical transmembrane segment spans residues 268-288 (WSTVGLCSGIICGLVAATPSS). Residue glycine 289 is a topological domain, extracellular. Residues 290–310 (CITLYGSLIQGIIAGVVCNFA) form a helical membrane-spanning segment. The Cytoplasmic portion of the chain corresponds to 311–330 (TKIKYYLKVDDSLDLLAEHG). The chain crosses the membrane as a helical span at residues 331–351 (IAGVVGLIFNALFAADWVIGM). At 352 to 372 (DGTTKHKGGWLTHNWKQMYIQ) the chain is on the extracellular side. A helical transmembrane segment spans residues 373 to 393 (IAYIGASAGYCAVVTAIICFV). At 394-489 (LGKIPGVHLR…NPKLHHAKEA (96 aa)) the chain is on the cytoplasmic side. The segment covering 448 to 481 (GANSASETNPTEDSQNSSLSSATVSGQNEKSNNP) has biased composition (polar residues). Residues 448–489 (GANSASETNPTEDSQNSSLSSATVSGQNEKSNNPKLHHAKEA) form a disordered region.

Belongs to the ammonia transporter channel (TC 1.A.11.2) family.

It localises to the membrane. In terms of biological role, transporter for ammonium (both charged and uncharged NH3 and NH4) to use as a nitrogen source. The affinity of MEP2 is about twenty times higher than that of MEP1. MEP3 has the lowest affinity. The sequence is that of Ammonium transporter MEP3 (MEP3) from Saccharomyces cerevisiae (strain ATCC 204508 / S288c) (Baker's yeast).